The following is a 173-amino-acid chain: Peptide methionine sulfoxide reductase MsrA (173 aa).

Cys10 is a catalytic residue.

It belongs to the MsrA Met sulfoxide reductase family.

The enzyme catalyses L-methionyl-[protein] + [thioredoxin]-disulfide + H2O = L-methionyl-(S)-S-oxide-[protein] + [thioredoxin]-dithiol. It carries out the reaction [thioredoxin]-disulfide + L-methionine + H2O = L-methionine (S)-S-oxide + [thioredoxin]-dithiol. Functionally, has an important function as a repair enzyme for proteins that have been inactivated by oxidation. Catalyzes the reversible oxidation-reduction of methionine sulfoxide in proteins to methionine. This Nautilia profundicola (strain ATCC BAA-1463 / DSM 18972 / AmH) protein is Peptide methionine sulfoxide reductase MsrA.